The sequence spans 380 residues: Ceramide synthase 2 (380 aa).

At 1–40 (MLQTLYDYFWWERLWLPVNLTWADLEDRDGRVYAKASDLY) the chain is on the lumenal side. Asparagine 19 carries an N-linked (GlcNAc...) asparagine glycan. A helical transmembrane segment spans residues 41–61 (ITLPLALLFLIVRYFFELYVA). Residues 67 to 128 (LLNIKEKTRL…RRRRNQDRPS (62 aa)) are homeobox-like. Residues 131-332 (KKFREASWRF…ILRMAHKFIT (202 aa)) form the TLC domain. 4 helical membrane passes run 140–160 (FTFYLIAFIAGMAVIVDKPWF), 181–201 (WYYMIELSFYWSLLFSIASDV), 209–229 (QIIHHVATIILISFSWFANYI), and 264–284 (IFIVFAIVFIITRLVILPFWI). Residues 291-300 (YPLELYPAFF) carry the Last loop motif motif. A helical transmembrane segment spans residues 304–324 (FFNSMMGVLQLLHIFWAYLIL). The Cytoplasmic segment spans residues 325 to 380 (RMAHKFITGKLVEDERSDREETESSEGEEAAAGGGAKSRPLANGHPILNNNHRKND). Residues 338–380 (DERSDREETESSEGEEAAAGGGAKSRPLANGHPILNNNHRKND) form a disordered region. Residue serine 341 is modified to Phosphoserine. Acidic residues predominate over residues 344–353 (EETESSEGEE). Position 346 is a phosphothreonine (threonine 346). Phosphoserine occurs at positions 348 and 349.

In terms of assembly, interacts with ATP6V0C, ASGR1, ASGR2 and SLC22A1/OCT1. Interacts with ELOV1, HSD17B12 and TECR. Interacts with NDUFS2. Interacts with PAQR4; the interaction regulates the stability and activity of CERS2 and is inhibited in presence of ceramides. In terms of processing, acetylated. Deacetylation by SIRT3 increases enzyme activity and promotes mitochondrial ceramide accumulation. Phosphorylated at the C-terminus by CK2, leading to increase the ceramide synthase activity. In terms of tissue distribution, expressed in kidney, liver, brain, heart, placenta and lung.

Its subcellular location is the endoplasmic reticulum membrane. The enzyme catalyses a very long-chain fatty acyl-CoA + a sphingoid base = an N-(very-long-chain fatty acyl)-sphingoid base + CoA + H(+). The catalysed reaction is docosanoyl-CoA + sphinganine = N-docosanoylsphinganine + CoA + H(+). It catalyses the reaction tetracosanoyl-CoA + sphinganine = N-tetracosanoylsphinganine + CoA + H(+). It carries out the reaction hexacosanoyl-CoA + sphinganine = N-hexacosanoylsphinganine + CoA + H(+). The enzyme catalyses (15Z)-tetracosenoyl-CoA + sphinganine = N-(15Z-tetracosenoyl)-sphinganine + CoA + H(+). The catalysed reaction is 2-hydroxytetracosanoyl-CoA + sphinganine = N-(2-hydroxytetracosanoyl)-sphinganine + CoA + H(+). It catalyses the reaction 2-hydroxydocosanoyl-CoA + sphinganine = N-(2-hydroxydocosanoyl)-sphinganine + CoA + H(+). It carries out the reaction 2-hydroxytetracosenoyl-CoA + sphinganine = N-(2-hydroxytetracosenoyl)-sphinganine + CoA + H(+). The enzyme catalyses tetracosenoyl-CoA + sphinganine = an N-tetracosenoylsphinganine + CoA + H(+). The catalysed reaction is hexacosenoyl-CoA + sphinganine = N-hexacosenoylsphinganine + CoA + H(+). It catalyses the reaction tetracosanoyl-CoA + sphing-4-enine = N-tetracosanoyl-sphing-4-enine + CoA + H(+). It carries out the reaction tetracosenoyl-CoA + sphing-4-enine = N-(tetracosenoyl)-sphing-4-enine + CoA + H(+). The enzyme catalyses heptadecasphing-4-enine + tetracosanoyl-CoA = N-tetracosanoyl-heptadecasphing-4-enine + CoA + H(+). The catalysed reaction is a fatty acyl-CoA + sphing-4-enine = an N-acylsphing-4-enine + CoA + H(+). It catalyses the reaction sphing-4-enine + hexadecanoyl-CoA = N-hexadecanoylsphing-4-enine + CoA + H(+). It carries out the reaction sphing-4-enine + octadecanoyl-CoA = N-octadecanoylsphing-4-enine + CoA + H(+). The enzyme catalyses eicosanoyl-CoA + sphing-4-enine = N-eicosanoyl-sphing-4-enine + CoA + H(+). The catalysed reaction is sphinganine + hexadecanoyl-CoA = N-hexadecanoylsphinganine + CoA + H(+). It catalyses the reaction sphinganine + octadecanoyl-CoA = N-(octadecanoyl)-sphinganine + CoA + H(+). It carries out the reaction sphinganine + (9Z)-octadecenoyl-CoA = N-(9Z-octadecenoyl)-sphinganine + CoA + H(+). The enzyme catalyses eicosanoyl-CoA + sphinganine = N-eicosanoylsphinganine + CoA + H(+). It functions in the pathway lipid metabolism; sphingolipid metabolism. Its activity is regulated as follows. Ceramide synthase activity is inhibited by sphingosine-1-phosphate. Functionally, ceramide synthase that catalyzes the transfer of the acyl chain from acyl-CoA to a sphingoid base, with high selectivity toward very-long-chain fatty acyl-CoA (chain length C22-C27). N-acylates sphinganine and sphingosine bases to form dihydroceramides and ceramides in de novo synthesis and salvage pathways, respectively. Plays a non-redundant role in the synthesis of ceramides with very-long-chain fatty acids in kidney, liver and brain. Regulates the abundance of myelin-specific sphingolipids galactosylceramide and sulfatide that affects myelin sheath architecture and motor neuron functions. In Homo sapiens (Human), this protein is Ceramide synthase 2.